The following is a 284-amino-acid chain: Phosphate import ATP-binding protein PstB 2 (284 aa).

Over residues 1-22 the composition is skewed to polar residues; it reads MTLLSTLRGISSPARQQPGTQS. Positions 1 to 29 are disordered; that stretch reads MTLLSTLRGISSPARQQPGTQSESRRGGD. An ABC transporter domain is found at 36–278; it reads LAVAGVSHGF…PDDARARKFI (243 aa). An ATP-binding site is contributed by 68 to 75; that stretch reads GPSGTGKT.

This sequence belongs to the ABC transporter superfamily. Phosphate importer (TC 3.A.1.7) family. In terms of assembly, the complex is composed of two ATP-binding proteins (PstB), two transmembrane proteins (PstC and PstA) and a solute-binding protein (PstS).

It localises to the cell membrane. The catalysed reaction is phosphate(out) + ATP + H2O = ADP + 2 phosphate(in) + H(+). Its function is as follows. Part of the ABC transporter complex PstSACB involved in phosphate import. Responsible for energy coupling to the transport system. This is Phosphate import ATP-binding protein PstB 2 from Natronomonas pharaonis (strain ATCC 35678 / DSM 2160 / CIP 103997 / JCM 8858 / NBRC 14720 / NCIMB 2260 / Gabara) (Halobacterium pharaonis).